A 293-amino-acid polypeptide reads, in one-letter code: MKVLPPPSIPLLGAHTSTAGGLKNAIYEGRDIGASTVQIFTANQRQWQRRALKEEVIEDFKAALKETDLSYIMSHAGYLINPGAPDPVILEKSRIGIYQEILDCITLGISFVNFHPGAALKSSKEDCMNKIVSSFSQSAPLFDSSPPLVVLLETTAGQGTLIGSNFEELGYLVQNLKNQIPIGVCVDTCHIFAAGYDITSPQGWEDVLNEFDEYVGLSYLRAFHLNDSMFPLGANKDRHAPLGEGYIGKESFKFLMTDERTRKIPKYLETPGGPENWQKEIGELLKFSKNRDS.

Zn(2+) is bound by residues H75, H115, E153, D187, H190, H224, D237, H239, and E269.

The protein belongs to the AP endonuclease 2 family. Requires Zn(2+) as cofactor.

It catalyses the reaction Endonucleolytic cleavage to 5'-phosphooligonucleotide end-products.. Its function is as follows. Endonuclease IV plays a role in DNA repair. It cleaves phosphodiester bonds at apurinic or apyrimidinic (AP) sites, generating a 3'-hydroxyl group and a 5'-terminal sugar phosphate. In Chlamydia pneumoniae (Chlamydophila pneumoniae), this protein is Probable endonuclease 4.